A 452-amino-acid chain; its full sequence is Retinoid-inducible serine carboxypeptidase (452 aa).

The signal sequence occupies residues 1-28 (MELSRRICLVRLWLLLLSFLLGFSAGSA). N-linked (GlcNAc...) asparagine glycosylation is found at Asn-64, Asn-102, and Asn-126. Ser-167 is a catalytic residue. Asn-192 and Asn-362 each carry an N-linked (GlcNAc...) asparagine glycan. Residues Asp-371 and His-431 contribute to the active site.

The protein belongs to the peptidase S10 family. Highly expressed in aorta, bladder, and kidney with much lower levels in all other tissues analyzed. Expression in kidney is restricted to proximal convoluted tubules.

The protein resides in the secreted. In terms of biological role, may be involved in vascular wall and kidney homeostasis. The polypeptide is Retinoid-inducible serine carboxypeptidase (Scpep1) (Rattus norvegicus (Rat)).